We begin with the raw amino-acid sequence, 563 residues long: TSET complex member tstC (563 aa).

Disordered regions lie at residues 146-170 (SPHQ…SFIT), 192-213 (NSLS…NNDS), 235-298 (VLNS…NYNN), 376-395 (HPNA…NEFK), and 428-563 (GSAS…FLNF). Residues 379–395 (AGKEAKEKEKEKENEFK) show a composition bias toward basic and acidic residues. Positions 428–459 (GSASSKSSPSTSPLSSSYNPSSPETSENSFSA) are enriched in low complexity. Residues 460-473 (TPISDSNSLKNSID) are compositionally biased toward polar residues. 2 stretches are compositionally biased toward low complexity: residues 474–487 (NNNN…NNNN) and 507–543 (NNSK…SSAA). The segment covering 552–563 (NSAKTKMNFLNF) has biased composition (polar residues).

As to quaternary structure, component of the TSET complex, a heterohexamer composed of tstA, tstB, tstC, tstD, tstE and tstF, which may act in plasma membrane turnover. tstA, tstB, tstC and tstD are likely to be the core complex members with tstE and tstF acting as associated scaffold proteins.

The polypeptide is TSET complex member tstC (Dictyostelium discoideum (Social amoeba)).